We begin with the raw amino-acid sequence, 398 residues long: Tryptophan synthase beta chain (398 aa).

Residue K88 is modified to N6-(pyridoxal phosphate)lysine.

The protein belongs to the TrpB family. In terms of assembly, tetramer of two alpha and two beta chains. The cofactor is pyridoxal 5'-phosphate.

It catalyses the reaction (1S,2R)-1-C-(indol-3-yl)glycerol 3-phosphate + L-serine = D-glyceraldehyde 3-phosphate + L-tryptophan + H2O. Its pathway is amino-acid biosynthesis; L-tryptophan biosynthesis; L-tryptophan from chorismate: step 5/5. Functionally, the beta subunit is responsible for the synthesis of L-tryptophan from indole and L-serine. In Haemophilus influenzae (strain PittGG), this protein is Tryptophan synthase beta chain.